Reading from the N-terminus, the 149-residue chain is Glycine cleavage system H protein (149 aa).

The Lipoyl-binding domain maps to 23 to 104 (LIWVGISNHA…PYGIWLFKIN (82 aa)). Lysine 64 is subject to N6-lipoyllysine.

It belongs to the GcvH family. In terms of assembly, the glycine cleavage system is composed of four proteins: P, T, L and H. (R)-lipoate serves as cofactor.

The glycine cleavage system catalyzes the degradation of glycine. The H protein shuttles the methylamine group of glycine from the P protein to the T protein. The protein is Glycine cleavage system H protein of Polynucleobacter necessarius subsp. necessarius (strain STIR1).